Reading from the N-terminus, the 282-residue chain is ATP phosphoribosyltransferase (282 aa).

It belongs to the ATP phosphoribosyltransferase family. Long subfamily. The cofactor is Mg(2+).

It is found in the cytoplasm. It catalyses the reaction 1-(5-phospho-beta-D-ribosyl)-ATP + diphosphate = 5-phospho-alpha-D-ribose 1-diphosphate + ATP. It participates in amino-acid biosynthesis; L-histidine biosynthesis; L-histidine from 5-phospho-alpha-D-ribose 1-diphosphate: step 1/9. Its activity is regulated as follows. Feedback inhibited by histidine. Functionally, catalyzes the condensation of ATP and 5-phosphoribose 1-diphosphate to form N'-(5'-phosphoribosyl)-ATP (PR-ATP). Has a crucial role in the pathway because the rate of histidine biosynthesis seems to be controlled primarily by regulation of HisG enzymatic activity. This chain is ATP phosphoribosyltransferase, found in Halobacterium salinarum (strain ATCC 29341 / DSM 671 / R1).